The chain runs to 996 residues: Alanine--tRNA ligase, chloroplastic/mitochondrial (996 aa).

Positions 677, 681, 779, and 783 each coordinate Zn(2+).

It belongs to the class-II aminoacyl-tRNA synthetase family. As to quaternary structure, monomer. Zn(2+) serves as cofactor.

The protein resides in the plastid. The protein localises to the chloroplast. Its subcellular location is the mitochondrion. It carries out the reaction tRNA(Ala) + L-alanine + ATP = L-alanyl-tRNA(Ala) + AMP + diphosphate. Its function is as follows. Catalyzes the attachment of alanine to tRNA(Ala) in a two-step reaction: alanine is first activated by ATP to form Ala-AMP and then transferred to the acceptor end of tRNA(Ala). Also edits incorrectly charged tRNA(Ala) via its editing domain. This is Alanine--tRNA ligase, chloroplastic/mitochondrial from Oryza sativa subsp. indica (Rice).